The sequence spans 51 residues: Insulin (51 aa).

Intrachain disulfides connect cysteine 7–cysteine 37, cysteine 19–cysteine 50, and cysteine 36–cysteine 41.

Belongs to the insulin family. In terms of assembly, heterodimer of a B chain and an A chain linked by two disulfide bonds.

The protein resides in the secreted. Its function is as follows. Insulin decreases blood glucose concentration. It increases cell permeability to monosaccharides, amino acids and fatty acids. It accelerates glycolysis, the pentose phosphate cycle, and glycogen synthesis in liver. The polypeptide is Insulin (ins) (Anguilla rostrata (American eel)).